The primary structure comprises 102 residues: Parathymosin (102 aa).

Residues 1 to 102 (MSEKSVEAAA…RQKTENGASA (102 aa)) form a disordered region. Ser2 bears the N-acetylserine mark. The residue at position 2 (Ser2) is a Phosphoserine. Lys4 carries the N6-acetyllysine modification. Phosphoserine occurs at positions 5 and 13. Residues 13–37 (SAKDLKEKKEKVEEKASRKERKKEV) show a composition bias toward basic and acidic residues. An N6-acetyllysine modification is found at Lys15. A compositionally biased stretch (acidic residues) spans 38–76 (VEEEENGAEEEEEETAEDGEEEDEGEEEDEEEEEEDDEG). Thr52 is modified (phosphothreonine). An N6-acetyllysine modification is found at Lys92.

Belongs to the pro/parathymosin family.

Functionally, parathymosin may mediate immune function by blocking the effect of prothymosin alpha which confers resistance to certain opportunistic infections. This Homo sapiens (Human) protein is Parathymosin (PTMS).